We begin with the raw amino-acid sequence, 207 residues long: Small ribosomal subunit protein uS7y (207 aa).

The residue at position 2 (A2) is an N-acetylalanine.

The protein belongs to the universal ribosomal protein uS7 family. In terms of tissue distribution, expressed in root tips, lateral root primordia, leaf primordia, shoot apical meristem and vasculature of cotyledons.

In Arabidopsis thaliana (Mouse-ear cress), this protein is Small ribosomal subunit protein uS7y.